We begin with the raw amino-acid sequence, 737 residues long: Transcriptional repressor CTCF (737 aa).

The residue at position 1 (methionine 1) is an N-acetylmethionine. Residue lysine 18 forms a Glycyl lysine isopeptide (Lys-Gly) (interchain with G-Cter in SUMO2) linkage. Lysine 74 participates in a covalent cross-link: Glycyl lysine isopeptide (Lys-Gly) (interchain with G-Cter in SUMO). Residues 180–211 are disordered; that stretch reads QGELPPQEDPSWQKDPDYQPPAKKTKKTKKSK. Positions 202–211 are enriched in basic residues; the sequence is KKTKKTKKSK. Lysine 219 participates in a covalent cross-link: Glycyl lysine isopeptide (Lys-Gly) (interchain with G-Cter in SUMO2). Residues 266 to 288 form a C2H2-type 1 zinc finger; the sequence is FQCELCSYTCPRRSNLDRHMKSH. Threonine 289 bears the Phosphothreonine mark. A C2H2-type 2 zinc finger spans residues 294–316; sequence HKCHLCGRAFRTVTLLRNHLNTH. Phosphothreonine is present on threonine 317. 2 consecutive C2H2-type zinc fingers follow at residues 322–345 and 351–373; these read HKCPDCDMAFVTSGELVRHRRYKH and FKCSMCDYASVEVSKLKRHIRSH. Position 374 is a phosphothreonine (threonine 374). The C2H2-type 5 zinc-finger motif lies at 379-401; the sequence is FQCSLCSYASRDTYKLKRHMRTH. Serine 402 is modified (phosphoserine). 5 C2H2-type zinc fingers span residues 407–430, 437–460, 467–489, 495–517, and 523–546; these read YECYICHARFTQSGTMKMHILQKH, FHCPHCDTVIARKSDLGVHLRKQH, KKCRYCDAVFHERYALIQHQKSH, FKCDQCDYACRQERHMIMHKRTH, and YACSHCDKTFRQKQLLDMHFKRYH. Residues 555–577 form a C2H2-type 11; atypical zinc finger; it reads FVCSKCGKTFTRRNTMARHADNC. Disordered regions lie at residues 573–687 and 699–727; these read HADN…EDQN and KKEPDAEPAEGEEEEAQAAPADAPNGDLT. The segment covering 593 to 604 has biased composition (basic residues); sequence KSKRGRKRKMRS. 3 positions are modified to phosphoserine: serine 609, serine 610, and serine 612. Residues 610–636 are compositionally biased toward acidic residues; the sequence is SDSENAEPDLDDNEEEEEPAVEIEPEP. Residues 637 to 657 show a composition bias toward pro residues; it reads EPQPQPQPQPQPQPVAPAPPP. Residues 668–687 are compositionally biased toward polar residues; that stretch reads RTNQPKQNQPTAIIQVEDQN. Lysine 699 participates in a covalent cross-link: Glycyl lysine isopeptide (Lys-Gly) (interchain with G-Cter in SUMO); alternate. Lysine 699 is covalently cross-linked (Glycyl lysine isopeptide (Lys-Gly) (interchain with G-Cter in SUMO2); alternate). Residues 704 to 714 are compositionally biased toward acidic residues; the sequence is AEPAEGEEEEA.

The protein belongs to the CTCF zinc-finger protein family. As to quaternary structure, interacts with CHD8. Interacts with LLPH. Interacts with CENPE. Interacts with BRD2; promoting BRD2 recruitment to chromatin. Post-translationally, sumoylated on Lys-74 and Lys-699; sumoylation of CTCF contributes to the repressive function of CTCF on the MYC P2 promoter.

The protein resides in the nucleus. It is found in the nucleoplasm. The protein localises to the chromosome. It localises to the centromere. Chromatin binding factor that binds to DNA sequence specific sites and regulates the 3D structure of chromatin. Binds together strands of DNA, thus forming chromatin loops, and anchors DNA to cellular structures, such as the nuclear lamina. Defines the boundaries between active and heterochromatic DNA via binding to chromatin insulators, thereby preventing interaction between promoter and nearby enhancers and silencers. Plays a critical role in the epigenetic regulation. Participates in the allele-specific gene expression at the imprinted IGF2/H19 gene locus. On the maternal allele, binding within the H19 imprinting control region (ICR) mediates maternally inherited higher-order chromatin conformation to restrict enhancer access to IGF2. Mediates interchromosomal association between IGF2/H19 and WSB1/NF1 and may direct distant DNA segments to a common transcription factory. Regulates asynchronous replication of IGF2/H19. Plays a critical role in gene silencing over considerable distances in the genome. Preferentially interacts with unmethylated DNA, preventing spreading of CpG methylation and maintaining methylation-free zones. Inversely, binding to target sites is prevented by CpG methylation. Plays an important role in chromatin remodeling. Can dimerize when it is bound to different DNA sequences, mediating long-range chromatin looping. Causes local loss of histone acetylation and gain of histone methylation in the beta-globin locus, without affecting transcription. When bound to chromatin, it provides an anchor point for nucleosomes positioning. Seems to be essential for homologous X-chromosome pairing. May participate with Tsix in establishing a regulatable epigenetic switch for X chromosome inactivation. May play a role in preventing the propagation of stable methylation at the escape genes from X-inactivation. Involved in sister chromatid cohesion. Associates with both centromeres and chromosomal arms during metaphase and required for cohesin localization to CTCF sites. Plays a role in the recruitment of CENPE to the pericentromeric/centromeric regions of the chromosome during mitosis. Acts as a transcriptional repressor binding to promoters of vertebrate MYC gene and BAG1 gene. Also binds to the PLK and PIM1 promoters. Acts as a transcriptional activator of APP. Regulates APOA1/C3/A4/A5 gene cluster and controls MHC class II gene expression. Plays an essential role in oocyte and preimplantation embryo development by activating or repressing transcription. Seems to act as tumor suppressor. This is Transcriptional repressor CTCF (Ctcf) from Rattus norvegicus (Rat).